A 638-amino-acid polypeptide reads, in one-letter code: UvrABC system protein C (638 aa).

The GIY-YIG domain occupies 20-97; it reads ECAGVYQMFD…IKKFQPKFNI (78 aa). A UVR domain is found at 209 to 244; sequence KELQENLSKKMEELSSHMYFEEAAEIRDRIKALSYV.

Belongs to the UvrC family. Interacts with UvrB in an incision complex.

Its subcellular location is the cytoplasm. Functionally, the UvrABC repair system catalyzes the recognition and processing of DNA lesions. UvrC both incises the 5' and 3' sides of the lesion. The N-terminal half is responsible for the 3' incision and the C-terminal half is responsible for the 5' incision. This Rickettsia canadensis (strain McKiel) protein is UvrABC system protein C.